A 284-amino-acid polypeptide reads, in one-letter code: Proline-rich protein 32 (284 aa).

Disordered stretches follow at residues 59-80 (RPPFNVPRTGARIPQNPRAPRH), 97-119 (EINSSEGLESQSQKGHDSINMSQ), and 143-171 (SGNNSKPYIPVPRSQGFFPPRGSQSRGPP).

In Mus musculus (Mouse), this protein is Proline-rich protein 32 (Prr32).